A 360-amino-acid polypeptide reads, in one-letter code: Lipid-A-disaccharide synthase (360 aa).

This sequence belongs to the LpxB family.

The enzyme catalyses a lipid X + a UDP-2-N,3-O-bis[(3R)-3-hydroxyacyl]-alpha-D-glucosamine = a lipid A disaccharide + UDP + H(+). Its pathway is bacterial outer membrane biogenesis; LPS lipid A biosynthesis. Its function is as follows. Condensation of UDP-2,3-diacylglucosamine and 2,3-diacylglucosamine-1-phosphate to form lipid A disaccharide, a precursor of lipid A, a phosphorylated glycolipid that anchors the lipopolysaccharide to the outer membrane of the cell. The sequence is that of Lipid-A-disaccharide synthase from Helicobacter pylori (strain Shi470).